Consider the following 693-residue polypeptide: Elongation factor G (693 aa).

Residues 9-283 (ERVRNIGIIA…AVCDYLPSPL (275 aa)) enclose the tr-type G domain. Residues 18–25 (AHIDAGKT), 82–86 (DTPGH), and 136–139 (NKMD) contribute to the GTP site.

This sequence belongs to the TRAFAC class translation factor GTPase superfamily. Classic translation factor GTPase family. EF-G/EF-2 subfamily.

It localises to the cytoplasm. In terms of biological role, catalyzes the GTP-dependent ribosomal translocation step during translation elongation. During this step, the ribosome changes from the pre-translocational (PRE) to the post-translocational (POST) state as the newly formed A-site-bound peptidyl-tRNA and P-site-bound deacylated tRNA move to the P and E sites, respectively. Catalyzes the coordinated movement of the two tRNA molecules, the mRNA and conformational changes in the ribosome. The polypeptide is Elongation factor G (Dehalococcoides mccartyi (strain ATCC BAA-2100 / JCM 16839 / KCTC 5957 / BAV1)).